A 485-amino-acid polypeptide reads, in one-letter code: Cytolytic protein enterolobin (485 aa).

2 disulfides stabilise this stretch: Cys34–Cys98 and Cys183–Cys189.

This sequence belongs to the aerolysin family. In terms of assembly, oligomerizes as a hexamer. The N-terminus is blocked.

Its function is as follows. Cytolytic protein with insecticidal activity. Acts as a pro-inflammatory agent. The polypeptide is Cytolytic protein enterolobin (Enterolobium contortisiliquum (Pacara earpod tree)).